The following is a 174-amino-acid chain: Fimbria A protein (174 aa).

The first 22 residues, 1–22 (MKLNKIMLATVLAFGVSSLANA), serve as a signal peptide directing secretion. Cysteine 41 and cysteine 80 are joined by a disulfide.

Belongs to the fimbrial protein family.

It is found in the fimbrium. Major structural component of mannose-resistant fimbriae of Serratia marcescens. The protein is Fimbria A protein (smfA) of Serratia marcescens.